The primary structure comprises 436 residues: UPF0229 protein mll9637 (436 aa).

Residues 54–103 (IPRKGTGEPTFGDDKESGRRQHILPGNRTFSSGDLIPKPGGGGGYGSAAG) form a disordered region.

The protein belongs to the UPF0229 family.

This Mesorhizobium japonicum (strain LMG 29417 / CECT 9101 / MAFF 303099) (Mesorhizobium loti (strain MAFF 303099)) protein is UPF0229 protein mll9637.